Reading from the N-terminus, the 180-residue chain is Large ribosomal subunit protein uL6c (180 aa).

The protein belongs to the universal ribosomal protein uL6 family. In terms of assembly, part of the 50S ribosomal subunit.

It localises to the plastid. The protein localises to the chloroplast. In terms of biological role, binds 23S rRNA. This chain is Large ribosomal subunit protein uL6c (rpl6), found in Pyropia yezoensis (Susabi-nori).